Here is a 564-residue protein sequence, read N- to C-terminus: Apyrase (564 aa).

The first 25 residues, 1 to 25 (MAGKPGIQLFVIFLLLSSFAAVVWA), serve as a signal peptide directing secretion. A divalent metal cation-binding residues include aspartate 48, histidine 50, aspartate 99, asparagine 131, histidine 234, and histidine 258. Arginine 371 is an AMP binding site. Residue asparagine 391 is glycosylated (N-linked (GlcNAc...) asparagine). 3 residues coordinate AMP: arginine 406, phenylalanine 425, and aspartate 515.

This sequence belongs to the 5'-nucleotidase family. It depends on a divalent metal cation as a cofactor. As to expression, female salivary gland (at protein level). Low-level expression in male tissues. Not detected in female carcasses without salivary glands.

The protein localises to the secreted. The enzyme catalyses a ribonucleoside 5'-triphosphate + 2 H2O = a ribonucleoside 5'-phosphate + 2 phosphate + 2 H(+). Functionally, facilitates hematophagy by inhibiting ADP-dependent platelet aggregation in the host. Cleaves adenosine triphosphate (ATP) and adenosine diphosphate (ADP) to adenosine monophosphate (AMP) and inorganic phosphate. May reduce probing time by facilitating the speed of locating blood. This is Apyrase from Aedes albopictus (Asian tiger mosquito).